Reading from the N-terminus, the 463-residue chain is MNTLIAITGLGIFCLLFEILNFRKGIVPFTILGLLGVLALNFYEFGTTASYYNNMITVSKFSTAFSSLFIILTIFLVALSHNFYENHQTKISDFIAIKVFLLAGAVAMVSFGNLAMFFLGIEILSIALYVLAASDRLNIKSNEAGMKYFLMGSFASGIILFGICLIYGAMGTFDIAEIHESSLSAELPIWFPIGMILMTIGMFFKIAAVPFHFWAPDVYEGSPALTTALMSTLAKVVAIATLFKLVSGLNLIPSLENQDLSNTFTNVILTISIASMTVGNIMALRQVNVKRMLAFSGISHAGFMLMTFLTIATSAGVLLYYTAAYALAGIAAFSVILYVCKNQDNEDITNFHGLGKTNPLLAAILTGSLLSMGGIPIFSGFFAKLFLFNQALHAGYVAIVIAAVINSIISVGYYFKLILAMYSKEPNEERTGKPFLIYAVAIISIGLNIALGLFPSLVLDLLN.

14 helical membrane passes run 2–22 (NTLI…ILNF), 25–45 (GIVP…FYEF), 61–81 (FSTA…ALSH), 91–110 (ISDF…AMVS), 114–133 (LAMF…VLAA), 149–169 (FLMG…IYGA), 189–209 (IWFP…IAAV), 223–243 (PALT…ATLF), 264–284 (FTNV…IMAL), 292–312 (MLAF…LTIA), 317–337 (VLLY…SVIL), 362–382 (AAIL…SGFF), 395–415 (GYVA…GYYF), and 434–454 (PFLI…LGLF).

The protein belongs to the complex I subunit 2 family. NDH-1 is composed of 14 different subunits. Subunits NuoA, H, J, K, L, M, N constitute the membrane sector of the complex.

The protein resides in the cell inner membrane. The catalysed reaction is a quinone + NADH + 5 H(+)(in) = a quinol + NAD(+) + 4 H(+)(out). Functionally, NDH-1 shuttles electrons from NADH, via FMN and iron-sulfur (Fe-S) centers, to quinones in the respiratory chain. The immediate electron acceptor for the enzyme in this species is believed to be a menaquinone. Couples the redox reaction to proton translocation (for every two electrons transferred, four hydrogen ions are translocated across the cytoplasmic membrane), and thus conserves the redox energy in a proton gradient. In Flavobacterium johnsoniae (strain ATCC 17061 / DSM 2064 / JCM 8514 / BCRC 14874 / CCUG 350202 / NBRC 14942 / NCIMB 11054 / UW101) (Cytophaga johnsonae), this protein is NADH-quinone oxidoreductase subunit N.